Here is a 500-residue protein sequence, read N- to C-terminus: NAD(P)H-quinone oxidoreductase chain 4, chloroplastic (500 aa).

A run of 14 helical transmembrane segments spans residues 4 to 24 (FPWLTIIVVLPIFAGSLIFFL), 35 to 55 (YTICICMLELLLTTYAFCYHF), 87 to 107 (LGPVLLTGFITTLATLAAWPV), 113 to 130 (LFHFLMLAMYSGQIGSFS), 134 to 154 (LLLFFIMWELELIPVYLLLSM), 167 to 187 (FILYTAGGSIFLLMGVLGVGL), 207 to 227 (VALEIIFYIGFLIAFAVKLPI), 242 to 262 (HYSTCMLLAGILLKMGAYGLI), 272 to 292 (AHSIFSPWLMVVGTIQIIYAA), 305 to 325 (IAYSSVSHMGFILIGIASITD), 330 to 350 (GAILQIISHGFIGAALFFLAG), 386 to 406 (LALPGMSGFVAEVLVFLGIIT), 416 to 436 (IAITFVMAIGMILTPIYLLSM), and 462 to 482 (LFVSISIFIPVIGIGMYPDFV).

This sequence belongs to the complex I subunit 4 family.

The protein resides in the plastid. The protein localises to the chloroplast thylakoid membrane. It catalyses the reaction a plastoquinone + NADH + (n+1) H(+)(in) = a plastoquinol + NAD(+) + n H(+)(out). It carries out the reaction a plastoquinone + NADPH + (n+1) H(+)(in) = a plastoquinol + NADP(+) + n H(+)(out). The protein is NAD(P)H-quinone oxidoreductase chain 4, chloroplastic of Helianthus annuus (Common sunflower).